Reading from the N-terminus, the 201-residue chain is Akirin-2 (201 aa).

2 positions are modified to phosphoserine: serine 18 and serine 21. A Nuclear localization signal motif is present at residues 23–28 (KRRRCA). Position 55 is a phosphoserine (serine 55). Residues 198–201 (SYVS) carry the SYVS motif motif.

Belongs to the akirin family. As to quaternary structure, homodimer. Interacts with IPO9; the interaction is direct. Associates with 20S and 26S proteasomes. Interacts with SMARCD1; promoting SWI/SNF complex recruitment. Interacts with NFKBIZ. Interacts with YWHAB. Polyubiquitinated. Polyubiquitination is dependent of UBR5 that extends pre-ubiquitinated AKIRIN2.

The protein resides in the nucleus. It localises to the cytoplasm. The protein localises to the membrane. In terms of biological role, molecular adapter that acts as a bridge between a variety of multiprotein complexes, and which is involved in embryonic development, immunity, myogenesis and brain development. Plays a key role in nuclear protein degradation by promoting import of proteasomes into the nucleus: directly binds to fully assembled 20S proteasomes at one end and to nuclear import receptor IPO9 at the other end, bridging them together and mediating the import of pre-assembled proteasome complexes through the nuclear pore. Involved in innate immunity by regulating the production of interleukin-6 (IL6) downstream of Toll-like receptor (TLR): acts by bridging the NF-kappa-B inhibitor NFKBIZ and the SWI/SNF complex, leading to promote induction of IL6. Also involved in adaptive immunity by promoting B-cell activation. Involved in brain development: required for the survival and proliferation of cerebral cortical progenitor cells. Involved in myogenesis: required for skeletal muscle formation and skeletal development, possibly by regulating expression of muscle differentiation factors. Also plays a role in facilitating interdigital tissue regression during limb development. This is Akirin-2 from Mus musculus (Mouse).